Reading from the N-terminus, the 567-residue chain is Urease subunit alpha (567 aa).

Positions 129-567 constitute a Urease domain; sequence GGIDSHIHFI…LPLAQRYFLF (439 aa). Ni(2+) contacts are provided by histidine 134, histidine 136, and lysine 217. Lysine 217 bears the N6-carboxylysine mark. Histidine 219 contacts substrate. 2 residues coordinate Ni(2+): histidine 246 and histidine 272. The Proton donor role is filled by histidine 320. Residue aspartate 360 coordinates Ni(2+).

The protein belongs to the metallo-dependent hydrolases superfamily. Urease alpha subunit family. In terms of assembly, heterotrimer of UreA (gamma), UreB (beta) and UreC (alpha) subunits. Three heterotrimers associate to form the active enzyme. Ni cation is required as a cofactor. Carboxylation allows a single lysine to coordinate two nickel ions.

It is found in the cytoplasm. The enzyme catalyses urea + 2 H2O + H(+) = hydrogencarbonate + 2 NH4(+). The protein operates within nitrogen metabolism; urea degradation; CO(2) and NH(3) from urea (urease route): step 1/1. The protein is Urease subunit alpha of Pseudomonas putida (strain W619).